The following is a 251-amino-acid chain: Triosephosphate isomerase (251 aa).

Residue N9–K11 coordinates substrate. The active-site Electrophile is the H94. The active-site Proton acceptor is E167. Substrate contacts are provided by residues G173, S213, and G234–G235.

This sequence belongs to the triosephosphate isomerase family. Homodimer.

It localises to the cytoplasm. The enzyme catalyses D-glyceraldehyde 3-phosphate = dihydroxyacetone phosphate. The protein operates within carbohydrate biosynthesis; gluconeogenesis. It participates in carbohydrate degradation; glycolysis; D-glyceraldehyde 3-phosphate from glycerone phosphate: step 1/1. Functionally, involved in the gluconeogenesis. Catalyzes stereospecifically the conversion of dihydroxyacetone phosphate (DHAP) to D-glyceraldehyde-3-phosphate (G3P). In Finegoldia magna (strain ATCC 29328 / DSM 20472 / WAL 2508) (Peptostreptococcus magnus), this protein is Triosephosphate isomerase.